Reading from the N-terminus, the 477-residue chain is Iroquois homeobox protein 6a (477 aa).

Positions 148-210 (GSTRRKNATR…NARRRLKKEN (63 aa)) form a DNA-binding region, homeobox. Disordered stretches follow at residues 209 to 282 (ENKM…PDIP) and 303 to 323 (DYLD…QSTS). The span at 219 to 237 (KAGDDRKEDLDSKDSKDEQ) shows a compositional bias: basic and acidic residues. The span at 243 to 253 (DLDDMEDEDCD) shows a compositional bias: acidic residues. Basic and acidic residues predominate over residues 254–264 (KLDSDCEKSGQ). Low complexity predominate over residues 310–321 (SKPQQQQPSPQS).

The protein belongs to the TALE/IRO homeobox family.

It is found in the nucleus. Functionally, transcription factor. Binds to the iroquois binding site (IBS) motif of target genes to regulate gene expression; functions as a transcriptional activator or repressor. In concert with irx5a, plays a role in visual performance. The polypeptide is Iroquois homeobox protein 6a (Danio rerio (Zebrafish)).